We begin with the raw amino-acid sequence, 198 residues long: Probable thymidylate kinase (198 aa).

7 to 14 (GIDGAGKS) serves as a coordination point for ATP.

Belongs to the thymidylate kinase family.

It catalyses the reaction dTMP + ATP = dTDP + ADP. This chain is Probable thymidylate kinase, found in Methanocorpusculum labreanum (strain ATCC 43576 / DSM 4855 / Z).